The primary structure comprises 380 residues: uncharacterized protein (380 aa).

This sequence belongs to the metallo-dependent hydrolases superfamily.

This is an uncharacterized protein from Methanocaldococcus jannaschii (strain ATCC 43067 / DSM 2661 / JAL-1 / JCM 10045 / NBRC 100440) (Methanococcus jannaschii).